Here is a 206-residue protein sequence, read N- to C-terminus: dITP/XTP pyrophosphatase (206 aa).

7 to 12 contributes to the substrate binding site; that stretch reads SNNAKK. Asp-72 (proton acceptor) is an active-site residue. Asp-72 lines the Mg(2+) pocket. Residues Ser-73, 155-158, Lys-182, and 187-188 each bind substrate; these read FGYD and HR.

The protein belongs to the HAM1 NTPase family. As to quaternary structure, homodimer. The cofactor is Mg(2+).

It catalyses the reaction XTP + H2O = XMP + diphosphate + H(+). The catalysed reaction is dITP + H2O = dIMP + diphosphate + H(+). The enzyme catalyses ITP + H2O = IMP + diphosphate + H(+). In terms of biological role, pyrophosphatase that catalyzes the hydrolysis of nucleoside triphosphates to their monophosphate derivatives, with a high preference for the non-canonical purine nucleotides XTP (xanthosine triphosphate), dITP (deoxyinosine triphosphate) and ITP. Seems to function as a house-cleaning enzyme that removes non-canonical purine nucleotides from the nucleotide pool, thus preventing their incorporation into DNA/RNA and avoiding chromosomal lesions. The chain is dITP/XTP pyrophosphatase from Corynebacterium glutamicum (strain R).